The primary structure comprises 31 residues: U14-ctenitoxin-Co1c (31 aa).

Expressed by the venom gland.

It localises to the secreted. Not toxic to mice by intracerebroventricular injection. The polypeptide is U14-ctenitoxin-Co1c (Ctenus ornatus (Brazilian spider)).